Here is a 436-residue protein sequence, read N- to C-terminus: GTPase Der (436 aa).

2 consecutive EngA-type G domains span residues 4–167 and 176–351; these read PVVA…PKVE and IRFC…ESHN. GTP is bound by residues 10–17, 57–61, 119–122, 182–189, 229–233, and 294–297; these read GRPNVGKS, DTGGI, NKVD, DTAGM, and NKWD. The 85-residue stretch at 352-436 folds into the KH-like domain; sequence IRVQTNVLND…PIRIIARARD (85 aa).

This sequence belongs to the TRAFAC class TrmE-Era-EngA-EngB-Septin-like GTPase superfamily. EngA (Der) GTPase family. Associates with the 50S ribosomal subunit.

Functionally, GTPase that plays an essential role in the late steps of ribosome biogenesis. The protein is GTPase Der of Bacillus cytotoxicus (strain DSM 22905 / CIP 110041 / 391-98 / NVH 391-98).